The sequence spans 200 residues: DNA-binding protein HupB (200 aa).

The bacterial histone-like domain stretch occupies residues M1–A90. N6-acetyllysine occurs at positions 3, 72, 86, 103, 137, 144, and 156. Residues A101–K200 form a degenerate repeats region region. Residues A179–K200 form a disordered region.

It belongs to the bacterial histone-like protein family. Long actinobacterial subfamily. In terms of assembly, binds to human laminin-2. In terms of processing, may also be methylated and possibly phosphorylated in vivo.

It localises to the cytoplasm. Its subcellular location is the nucleoid. The protein localises to the secreted. It is found in the cell wall. The protein resides in the cell surface. The catalysed reaction is 4 Fe(2+) + O2 + 4 H(+) = 4 Fe(3+) + 2 H2O. A nucleoid-associated protein (NAP) that plays a role in local chromosome architecture and chromosome compactation. Required for biofilm formation, stress survival and possibly in cell wall assembly, probably influences transcription. RNase E and HupB jointly contribute to cellular adaptation to changing growth conditions and survival during antibiotic treatment and in the host. Its function is as follows. Binds Fe(3+) but not Fe(2+). Has ferroxidase activity, converts Fe(2+) into Fe(3+) and in the presence of H(2)O(2) prevents the generation of hydroxyl radicals (the Fenton reaction). Protects DNA from damage in the presence of FeSO(4) and H(2)O(2). May function in iron storage. Functionally, may be involved in entry into human Schwann cells. This chain is DNA-binding protein HupB, found in Mycobacterium leprae (strain TN).